We begin with the raw amino-acid sequence, 87 residues long: Putative regulatory protein BCG9842_B1272 (87 aa).

This sequence belongs to the RemA family.

This is Putative regulatory protein BCG9842_B1272 from Bacillus cereus (strain G9842).